A 370-amino-acid polypeptide reads, in one-letter code: MSAALRPVPRPGVLAIEAYVPGKSAAPAGVKLHKLSSNETPLGPSPAAVAAMRETASHLELYPDGSAAALRRAIAGKYGLDPARIVCGAGSDELLSLLTYAFMGPGDEGIYSEYGFLVYRIAILAAGGTPVVAPERDHTADVDAILAAVTPRTRIVYLANPNNPTGTYLPFDEVRRLHAGLPGDVLLVLDAAYAEYVRRNDYAAGLELVAESENVVMTRTFSKAYGLAALRIGWMVAPPAVADAVNRIRGPFNLGSPAIAAGAAAVADDAHIAAAVAHNEEWLPKVTRALTEIGLSVTPSVGNFVLIHFPDAPGRGAAEADAFLTARGLILRRVAAYGLPHALRMTIGSAEANEAVIAALRAFVKDHPDA.

Lys223 carries the post-translational modification N6-(pyridoxal phosphate)lysine.

It belongs to the class-II pyridoxal-phosphate-dependent aminotransferase family. Histidinol-phosphate aminotransferase subfamily. In terms of assembly, homodimer. Pyridoxal 5'-phosphate serves as cofactor.

It catalyses the reaction L-histidinol phosphate + 2-oxoglutarate = 3-(imidazol-4-yl)-2-oxopropyl phosphate + L-glutamate. It functions in the pathway amino-acid biosynthesis; L-histidine biosynthesis; L-histidine from 5-phospho-alpha-D-ribose 1-diphosphate: step 7/9. The protein is Histidinol-phosphate aminotransferase of Methylobacterium sp. (strain 4-46).